Reading from the N-terminus, the 186-residue chain is Transcriptional repressor NrdR (186 aa).

The tract at residues 1–24 is disordered; that stretch reads MRCPYCGGLDTQVKDSRPSDDASA. A zinc finger lies at 3-34; sequence CPYCGGLDTQVKDSRPSDDASAIRRRRICPDC. Residues 12-24 show a composition bias toward basic and acidic residues; that stretch reads QVKDSRPSDDASA. The 91-residue stretch at 49–139 folds into the ATP-cone domain; it reads LTVVKRSGRR…VYKNFREARD (91 aa). Residues 146–186 form a disordered region; sequence RLNGAGRPGGEPEPPDEAAPGPAAAPGEGGEAPARRARSRA.

Belongs to the NrdR family. Zn(2+) serves as cofactor.

Functionally, negatively regulates transcription of bacterial ribonucleotide reductase nrd genes and operons by binding to NrdR-boxes. The protein is Transcriptional repressor NrdR of Methylobacterium sp. (strain 4-46).